The chain runs to 302 residues: Methionyl-tRNA formyltransferase (302 aa).

107–110 (SDLP) serves as a coordination point for (6S)-5,6,7,8-tetrahydrofolate.

The protein belongs to the Fmt family.

It catalyses the reaction L-methionyl-tRNA(fMet) + (6R)-10-formyltetrahydrofolate = N-formyl-L-methionyl-tRNA(fMet) + (6S)-5,6,7,8-tetrahydrofolate + H(+). In terms of biological role, attaches a formyl group to the free amino group of methionyl-tRNA(fMet). The formyl group appears to play a dual role in the initiator identity of N-formylmethionyl-tRNA by promoting its recognition by IF2 and preventing the misappropriation of this tRNA by the elongation apparatus. The polypeptide is Methionyl-tRNA formyltransferase (Rickettsia massiliae (strain Mtu5)).